The primary structure comprises 1217 residues: Splicing factor 3B subunit 3 (1217 aa).

The protein belongs to the RSE1 family. Component of the 17S U2 SnRNP complex, a ribonucleoprotein complex that contains small nuclear RNA (snRNA) U2 and a number of specific proteins. Part of the SF3B subcomplex of the 17S U2 SnRNP complex. SF3B associates with the splicing subcomplex SF3A and a 12S RNA unit to form the U2 small nuclear ribonucleoproteins complex (U2 snRNP). Component of the minor (U12-type spliceosome) spliceosome.

The protein resides in the nucleus. In terms of biological role, component of the 17S U2 SnRNP complex of the spliceosome, a large ribonucleoprotein complex that removes introns from transcribed pre-mRNAs. The 17S U2 SnRNP complex (1) directly participates in early spliceosome assembly and (2) mediates recognition of the intron branch site during pre-mRNA splicing by promoting the selection of the pre-mRNA branch-site adenosine, the nucleophile for the first step of splicing. Within the 17S U2 SnRNP complex, SF3B3 is part of the SF3B subcomplex, which is required for 'A' complex assembly formed by the stable binding of U2 snRNP to the branchpoint sequence in pre-mRNA. Also acts as a component of the minor spliceosome, which is involved in the splicing of U12-type introns in pre-mRNAs. The sequence is that of Splicing factor 3B subunit 3 (sf3b3) from Danio rerio (Zebrafish).